Consider the following 237-residue polypeptide: DCN1-like protein 5 (237 aa).

A phosphoserine mark is found at S9, S41, and S48. Residues 46–232 form the DCUN1 domain; that stretch reads FSSKKCLAWF…LLDEFVEWQK (187 aa).

Part of a complex that contains DCUN1D5, CUL1 and RBX1; this interaction is bridged by CUL1. Interacts (via the DCUN1 domain) with the unneddylated cullins: interacts with CUL1, CUL2, CUL3, CUL4A, CUL4B and CUL5; these interactions promote the cullin neddylation and the identity of the cullin dictates the affinity of the interaction. Interacts (via DCUN1 domain) with UBE2M (N-terminally acetylated form) and probably with UBE2F (N-terminally acetylated form). May also interact with regulators or subunits of cullin-RING ligases such as RBX1, RNF7, ELOB and DDB1; these interactions are bridged by cullins. Interacts with CAND1; this interaction is bridged by cullins and strongly inhibits the neddylation of cullins. These CAND-cullin-DCNL complexes can only be neddylated in the presence of a substrate adapter. Post-translationally, phosphorylation at Ser-41 is independent of cullin's interaction. Phosphorylated in response to both TICAM1 and MYD88 dependent Toll-like receptor (TLR) pathway activation. Phosphorylated in response to IL1B stimulation.

The protein localises to the nucleus. The protein resides in the cytoplasm. It is found in the cytoskeleton. It localises to the spindle. In terms of biological role, contributes to the neddylation of all cullins by transferring NEDD8 from N-terminally acetylated NEDD8-conjugating E2s enzyme to different cullin C-terminal domain-RBX complexes which is necessary for the activation of cullin-RING E3 ubiquitin ligases (CRLs). May play a role in DNA damage response and may participate in cell proliferation and anchorage-independent cell growth. The sequence is that of DCN1-like protein 5 from Pongo abelii (Sumatran orangutan).